Reading from the N-terminus, the 185-residue chain is Probable E3 ubiquitin-protein ligase ATL44 (185 aa).

Residues 29 to 49 traverse the membrane as a helical segment; sequence VVILSALLCALICVAGLAAVV. The RING-type; atypical zinc-finger motif lies at 102–144; that stretch reads CAICLTDFADGEEIRVLPLCGHSFHVECIDKWLVSRSSCPSCR. The interval 163–185 is disordered; it reads MKDQAHRHQHHQHSSTTIPTFLP. Positions 176–185 are enriched in polar residues; the sequence is SSTTIPTFLP.

Belongs to the RING-type zinc finger family. ATL subfamily. In terms of assembly, interacts with BIK1. Post-translationally, auto-monoubiquitination. As to expression, expressed in stems, flowers and green siliques.

It is found in the membrane. It carries out the reaction S-ubiquitinyl-[E2 ubiquitin-conjugating enzyme]-L-cysteine + [acceptor protein]-L-lysine = [E2 ubiquitin-conjugating enzyme]-L-cysteine + N(6)-ubiquitinyl-[acceptor protein]-L-lysine.. Its pathway is protein modification; protein ubiquitination. In terms of biological role, E3 ubiquitin-protein ligase that possess E3 ubiquitin ligase activity in vitro and mediates protein monoubiquitination. Triggers the monoubiquitination of phosphorylated BIK1 in response to pathogen-associated molecular pattern (PAMP) detection. This is Probable E3 ubiquitin-protein ligase ATL44 from Arabidopsis thaliana (Mouse-ear cress).